Here is a 358-residue protein sequence, read N- to C-terminus: Heat-inducible transcription repressor HrcA (358 aa).

It belongs to the HrcA family.

Its function is as follows. Negative regulator of class I heat shock genes (grpE-dnaK-dnaJ and groELS operons). Prevents heat-shock induction of these operons. In Caulobacter vibrioides (strain NA1000 / CB15N) (Caulobacter crescentus), this protein is Heat-inducible transcription repressor HrcA.